A 284-amino-acid polypeptide reads, in one-letter code: Pheromone-regulated membrane protein 4 (284 aa).

Residues 20–38 (IISLTLVLLGVFSFLLLTW) traverse the membrane as a helical segment. One can recognise a Glutaredoxin domain in the interval 157–272 (RTDFLDIIRT…PLLKSEARGN (116 aa)).

It is found in the membrane. The polypeptide is Pheromone-regulated membrane protein 4 (PRM4) (Saccharomyces cerevisiae (strain ATCC 204508 / S288c) (Baker's yeast)).